Reading from the N-terminus, the 213-residue chain is Transcription antitermination protein NusB (213 aa).

Belongs to the NusB family.

Its function is as follows. Involved in transcription antitermination. Required for transcription of ribosomal RNA (rRNA) genes. Binds specifically to the boxA antiterminator sequence of the ribosomal RNA (rrn) operons. This is Transcription antitermination protein NusB from Synechococcus elongatus (strain ATCC 33912 / PCC 7942 / FACHB-805) (Anacystis nidulans R2).